We begin with the raw amino-acid sequence, 335 residues long: Probable cytosolic iron-sulfur protein assembly protein Ciao1 (335 aa).

WD repeat units follow at residues 12–51, 57–96, 101–140, 146–185, 192–231, 250–289, and 301–335; these read GHKGRIWGVAWHPKGNVFASCGEDKAIRIWSLTGNTWSTK, GHKRTIREIRWSPCGQYLASASFDATTAIWSKSSGEFECN, GHENEVKSVSWSRSGGLLATCSRDKSVWIWEVAGDDEFEC, PHTQDVKRVVWHPTKDVLASASYDNTIKMFAEEPIDNDWD, SHTSTVWGIDFDADGERLVSCSDDTTIKIWKAYHPGNTAG, QHSRAIYDVSWCKLTGLIATACGDDGIRIFKETSDSKPDE, and AHDQDVNSVQWNPVVAGQLISCSDDGTIKIWKVSE.

It belongs to the WD repeat CIA1 family.

Its function is as follows. Essential component of the cytosolic iron-sulfur (Fe/S) protein assembly machinery. Required for the maturation of extramitochondrial Fe/S proteins. This is Probable cytosolic iron-sulfur protein assembly protein Ciao1 from Drosophila simulans (Fruit fly).